The following is a 314-amino-acid chain: Acetyl-coenzyme A carboxylase carboxyl transferase subunit beta (314 aa).

The 271-residue stretch at Leu37–Tyr307 folds into the CoA carboxyltransferase N-terminal domain. Residues Cys41, Cys44, Cys60, and Cys63 each coordinate Zn(2+). Residues Cys41–Cys63 form a C4-type zinc finger.

The protein belongs to the AccD/PCCB family. As to quaternary structure, acetyl-CoA carboxylase is a heterohexamer composed of biotin carboxyl carrier protein (AccB), biotin carboxylase (AccC) and two subunits each of ACCase subunit alpha (AccA) and ACCase subunit beta (AccD). Zn(2+) serves as cofactor.

It localises to the cytoplasm. The catalysed reaction is N(6)-carboxybiotinyl-L-lysyl-[protein] + acetyl-CoA = N(6)-biotinyl-L-lysyl-[protein] + malonyl-CoA. It functions in the pathway lipid metabolism; malonyl-CoA biosynthesis; malonyl-CoA from acetyl-CoA: step 1/1. Component of the acetyl coenzyme A carboxylase (ACC) complex. Biotin carboxylase (BC) catalyzes the carboxylation of biotin on its carrier protein (BCCP) and then the CO(2) group is transferred by the transcarboxylase to acetyl-CoA to form malonyl-CoA. In Synechococcus sp. (strain JA-3-3Ab) (Cyanobacteria bacterium Yellowstone A-Prime), this protein is Acetyl-coenzyme A carboxylase carboxyl transferase subunit beta.